The following is a 110-amino-acid chain: V-type proton ATPase subunit G 1 (110 aa).

The protein belongs to the V-ATPase G subunit family. In terms of assembly, V-ATPase is a heteromultimeric enzyme composed of a peripheral catalytic V1 complex (components A to H) attached to an integral membrane V0 proton pore complex (components: a, c, c', c'' and d).

Its function is as follows. Catalytic subunit of the peripheral V1 complex of vacuolar ATPase (V-ATPase). V-ATPase is responsible for acidifying a variety of intracellular compartments in eukaryotic cells. This chain is V-type proton ATPase subunit G 1 (VATG1), found in Nicotiana tabacum (Common tobacco).